A 1072-amino-acid polypeptide reads, in one-letter code: DNA-directed RNA polymerase subunit beta (1072 aa).

This sequence belongs to the RNA polymerase beta chain family. As to quaternary structure, in plastids the minimal PEP RNA polymerase catalytic core is composed of four subunits: alpha, beta, beta', and beta''. When a (nuclear-encoded) sigma factor is associated with the core the holoenzyme is formed, which can initiate transcription.

It is found in the plastid. The protein localises to the chloroplast. It catalyses the reaction RNA(n) + a ribonucleoside 5'-triphosphate = RNA(n+1) + diphosphate. In terms of biological role, DNA-dependent RNA polymerase catalyzes the transcription of DNA into RNA using the four ribonucleoside triphosphates as substrates. The sequence is that of DNA-directed RNA polymerase subunit beta from Crucihimalaya wallichii (Rock-cress).